The primary structure comprises 730 residues: Trimethylamine dehydrogenase (730 aa).

Proline 29, cysteine 31, tyrosine 61, and glutamate 104 together coordinate FMN. Cysteine 31 carries the post-translational modification S-6-FMN cysteine. 170–173 lines the substrate pocket; the sequence is YGAH. Tyrosine 175 serves as the catalytic Proton donor. Residues arginine 223, aspartate 268, arginine 300, alanine 322, and arginine 323 each coordinate FMN. [4Fe-4S] cluster is bound by residues cysteine 346, cysteine 349, cysteine 352, and cysteine 365. The ADP site is built by serine 401, aspartate 420, threonine 421, histidine 428, methionine 471, and aspartate 675.

The protein in the N-terminal section; belongs to the NADH:flavin oxidoreductase/NADH oxidase family. As to quaternary structure, homodimer. Forms a ternary complex with the heterodimeric electron transfer flavoprotein. Requires FMN as cofactor. It depends on [4Fe-4S] cluster as a cofactor.

The enzyme catalyses trimethylamine + oxidized [electron-transfer flavoprotein] + H2O + H(+) = dimethylamine + reduced [electron-transfer flavoprotein] + formaldehyde. In Methylophilus methylotrophus (Bacterium W3A1), this protein is Trimethylamine dehydrogenase.